The sequence spans 90 residues: Small ribosomal subunit protein uS15 (90 aa).

Belongs to the universal ribosomal protein uS15 family. As to quaternary structure, part of the 30S ribosomal subunit. Forms a bridge to the 50S subunit in the 70S ribosome, contacting the 23S rRNA.

Its function is as follows. One of the primary rRNA binding proteins, it binds directly to 16S rRNA where it helps nucleate assembly of the platform of the 30S subunit by binding and bridging several RNA helices of the 16S rRNA. In terms of biological role, forms an intersubunit bridge (bridge B4) with the 23S rRNA of the 50S subunit in the ribosome. The sequence is that of Small ribosomal subunit protein uS15 from Tropheryma whipplei (strain TW08/27) (Whipple's bacillus).